The chain runs to 201 residues: Lipoprotein signal peptidase (201 aa).

Transmembrane regions (helical) follow at residues 73-93 and 97-117; these read SNAIFLITNTIIVCYLYYLMI and TIGSFAGYSFVIGGAVGNLID. Residues aspartate 126 and aspartate 144 contribute to the active site. Residues 135–155 traverse the membrane as a helical segment; sequence YSFPVFNLADCFIIIGVIILI.

The protein belongs to the peptidase A8 family.

Its subcellular location is the cell inner membrane. The catalysed reaction is Release of signal peptides from bacterial membrane prolipoproteins. Hydrolyzes -Xaa-Yaa-Zaa-|-(S,diacylglyceryl)Cys-, in which Xaa is hydrophobic (preferably Leu), and Yaa (Ala or Ser) and Zaa (Gly or Ala) have small, neutral side chains.. It functions in the pathway protein modification; lipoprotein biosynthesis (signal peptide cleavage). Its function is as follows. This protein specifically catalyzes the removal of signal peptides from prolipoproteins. This chain is Lipoprotein signal peptidase, found in Rickettsia conorii (strain ATCC VR-613 / Malish 7).